A 2463-amino-acid polypeptide reads, in one-letter code: Protein TIC 214 (2463 aa).

Helical transmembrane passes span 18-38 (VGLY…LFLL), 60-80 (FFTG…HLAL), 86-106 (ILLL…SGQW), 127-147 (LVFL…GRPM), 170-190 (FVGW…VFVW), and 297-317 (LFSI…PLLY). The stretch at 326-441 (QLQRKLSNET…AARAMQEAYK (116 aa)) forms a coiled coil. Disordered stretches follow at residues 792 to 841 (AVPK…RKVN), 1230 to 1249 (SIQK…GPKK), 1393 to 1417 (SGGR…EQDF), 2116 to 2136 (EEEK…KLKK), and 2162 to 2187 (KQRA…RKVQ). Basic residues predominate over residues 794-830 (PKKKKKISKSKQKNVKSKQKNVKSKQKNVKSKQKNVK). 3 stretches are compositionally biased toward basic and acidic residues: residues 832 to 841 (KQNEIKRKVN), 1231 to 1249 (IQKD…GPKK), and 1397 to 1417 (ETPE…EQDF). Positions 2049 to 2192 (WDALVASLKQ…KRKVQVQENK (144 aa)) form a coiled coil. A compositionally biased stretch (basic residues) spans 2124–2136 (KRKKERKKEKLKK).

Belongs to the TIC214 family. In terms of assembly, part of the Tic complex.

The protein resides in the plastid. The protein localises to the chloroplast inner membrane. Its function is as follows. Involved in protein precursor import into chloroplasts. May be part of an intermediate translocation complex acting as a protein-conducting channel at the inner envelope. In Oenothera elata subsp. hookeri (Hooker's evening primrose), this protein is Protein TIC 214.